The chain runs to 370 residues: Ubiquitin-binding protein Rv1468c (370 aa).

A UBA region spans residues 1–72 (MSFVVANTEF…QVLSAQAAAF (72 aa)). The 93-residue stretch at 1–93 (MSFVVANTEF…AQAYAAAEAT (93 aa)) folds into the PE domain.

This sequence belongs to the mycobacterial PE family. PGRS subfamily. In terms of assembly, interacts directly with host polyubiquitin in a UBA-dependent manner.

Its subcellular location is the secreted. It is found in the cell wall. The protein localises to the cell surface. Its function is as follows. Mediates direct binding of host ubiquitin (Ub) to the mycobacterial surface, which triggers host xenophagy. Interaction between Rv1468c and ubiquitin recruits autophagy receptor p62 to deliver mycobacteria into LC3-associated autophagosomes. It could be a viable evolutionary strategy adopted by M.tuberculosis to maintain long-term intracellular survival through self-controlling its intracellular bacterial loads to avoid excessive host inflammatory immune responses. The sequence is that of Ubiquitin-binding protein Rv1468c from Mycobacterium tuberculosis (strain ATCC 25618 / H37Rv).